The following is a 218-amino-acid chain: MNLLFRLAVFLSLWCCSDAQGQTKEESTEEVKIEVLHRPENCSKTSRKGDLLNAHYDGYLAKDGSKFYCSRTQDEGHPKWFVLGVGHVIKGLDIAMMDMCPGEKRKVIIPPSFAYGKEGYAEGKIPPNATLMFEIELYAVTKGPRSIETFKQIDTDNDRQLSKAEIELYLQKDFEKDANPRDKSYQKAVLEDIFKKNDHNGDGFISPKEYNVHQHDEL.

Positions 1 to 19 (MNLLFRLAVFLSLWCCSDA) are cleaved as a signal peptide. 2 N-linked (GlcNAc...) asparagine glycosylation sites follow: Asn41 and Asn128. The 93-residue stretch at 49–141 (GDLLNAHYDG…MFEIELYAVT (93 aa)) folds into the PPIase FKBP-type domain. 2 consecutive EF-hand domains span residues 141 to 176 (TKGPRSIETFKQIDTDNDRQLSKAEIELYLQKDFEK) and 185 to 218 (YQKAVLEDIFKKNDHNGDGFISPKEYNVHQHDEL). Positions 154, 156, 158, 160, 165, 198, 200, 202, and 209 each coordinate Ca(2+). The segment at 197 to 218 (NDHNGDGFISPKEYNVHQHDEL) is disordered. The short motif at 215 to 218 (HDEL) is the Prevents secretion from ER element.

Post-translationally, glycosylated. Expressed at highest levels in heart, lung and testis. Weakly expressed in kidney and lymph node. Little or no expression detected in brain, thymus, spleen and liver.

It localises to the endoplasmic reticulum lumen. It catalyses the reaction [protein]-peptidylproline (omega=180) = [protein]-peptidylproline (omega=0). PPIases accelerate the folding of proteins during protein synthesis. In Mus musculus (Mouse), this protein is Peptidyl-prolyl cis-trans isomerase FKBP7 (Fkbp7).